Consider the following 368-residue polypeptide: DNA-directed RNA polymerase II subunit GRINL1A (368 aa).

Residues Lys-29–Val-68 form an important for transcription repressor activity region. 3 stretches are compositionally biased toward polar residues: residues Ser-116–Gly-131, Gly-205–Gly-224, and Gln-258–Ser-273. Disordered regions lie at residues Ser-116–Ser-186, Asp-203–Lys-227, and Pro-255–Lys-282. The tract at residues Lys-227–His-298 is interaction with Pol II. Ser-270 carries the post-translational modification Phosphoserine. The interval Met-299–Lys-314 is important for transcription repressor activity. Residues Thr-301–Arg-335 are a coiled coil. The segment at Gln-315–Met-340 is interaction with Pol II. A disordered region spans residues Lys-339–Phe-368. Acidic residues predominate over residues Asp-358–Phe-368.

Belongs to the GRINL1 family. In terms of assembly, component of the Pol II(G) complex, which contains the RNA polymerase II (Pol II) core complex subunits and POLR2M isoform 1. Pol II(G) appears to be an abundant form of Pol II. In terms of processing, dephosphorylated at Ser-270 by the PNUTS-PP1 complex, promoting RNA polymerase II transcription pause-release. Detected in adult an fetal brain. Detected in heart, kidney, skeletal muscle, small intestine, lung, prostate and testis.

It localises to the nucleus. Functionally, appears to be a stable component of the Pol II(G) complex form of RNA polymerase II (Pol II). Pol II synthesizes mRNA precursors and many functional non-coding RNAs and is the central component of the basal RNA polymerase II transcription machinery. May play a role in the Mediator complex-dependent regulation of transcription activation. Acts as a negative regulator of transcriptional activation; this repression is relieved by the Mediator complex, which restores Pol II(G) activator-dependent transcription to a level equivalent to that of Pol II. The polypeptide is DNA-directed RNA polymerase II subunit GRINL1A (POLR2M) (Homo sapiens (Human)).